The sequence spans 150 residues: PTTG1IP family member 2 (150 aa).

The N-terminal stretch at 1 to 19 is a signal peptide; the sequence is MCWLRAWSHILLPVFLSVA. At 20-98 the chain is on the extracellular side; the sequence is LIQLIFNLSD…SIFWANCNVD (79 aa). N-linked (GlcNAc...) asparagine glycosylation is present at N26. A helical membrane pass occupies residues 99–119; that stretch reads LFGIVMLILIVILALAFLWYC. At 120–150 the chain is on the cytoplasmic side; the sequence is LAYYFYMQQHMALYARHGQVPVYNWDAPGDW.

The protein resides in the membrane. The chain is PTTG1IP family member 2 from Mus musculus (Mouse).